Reading from the N-terminus, the 305-residue chain is Methionyl-tRNA formyltransferase (305 aa).

111–114 (SLLP) is a binding site for (6S)-5,6,7,8-tetrahydrofolate.

It belongs to the Fmt family.

The catalysed reaction is L-methionyl-tRNA(fMet) + (6R)-10-formyltetrahydrofolate = N-formyl-L-methionyl-tRNA(fMet) + (6S)-5,6,7,8-tetrahydrofolate + H(+). Attaches a formyl group to the free amino group of methionyl-tRNA(fMet). The formyl group appears to play a dual role in the initiator identity of N-formylmethionyl-tRNA by promoting its recognition by IF2 and preventing the misappropriation of this tRNA by the elongation apparatus. The protein is Methionyl-tRNA formyltransferase of Helicobacter acinonychis (strain Sheeba).